The sequence spans 213 residues: Uridine kinase (213 aa).

15–22 (GASASGKS) contributes to the ATP binding site.

The protein belongs to the uridine kinase family.

It is found in the cytoplasm. The enzyme catalyses uridine + ATP = UMP + ADP + H(+). It carries out the reaction cytidine + ATP = CMP + ADP + H(+). The protein operates within pyrimidine metabolism; CTP biosynthesis via salvage pathway; CTP from cytidine: step 1/3. Its pathway is pyrimidine metabolism; UMP biosynthesis via salvage pathway; UMP from uridine: step 1/1. This Proteus mirabilis (strain HI4320) protein is Uridine kinase.